A 120-amino-acid chain; its full sequence is Holo-[acyl-carrier-protein] synthase (120 aa).

2 residues coordinate Mg(2+): Asp-8 and Glu-58.

It belongs to the P-Pant transferase superfamily. AcpS family. The cofactor is Mg(2+).

The protein resides in the cytoplasm. The enzyme catalyses apo-[ACP] + CoA = holo-[ACP] + adenosine 3',5'-bisphosphate + H(+). Transfers the 4'-phosphopantetheine moiety from coenzyme A to a Ser of acyl-carrier-protein. The protein is Holo-[acyl-carrier-protein] synthase of Streptococcus sanguinis (strain SK36).